Here is a 398-residue protein sequence, read N- to C-terminus: Acetate kinase (398 aa).

Asn-8 is a binding site for Mg(2+). ATP is bound at residue Lys-15. Arg-90 is a substrate binding site. Asp-147 acts as the Proton donor/acceptor in catalysis. ATP-binding positions include His-207 to Gly-211, Asp-282 to Arg-284, and Gly-330 to Asn-334. Glu-383 contributes to the Mg(2+) binding site.

Belongs to the acetokinase family. In terms of assembly, homodimer. It depends on Mg(2+) as a cofactor. Mn(2+) is required as a cofactor.

It localises to the cytoplasm. It carries out the reaction acetate + ATP = acetyl phosphate + ADP. It participates in metabolic intermediate biosynthesis; acetyl-CoA biosynthesis; acetyl-CoA from acetate: step 1/2. Its function is as follows. Catalyzes the formation of acetyl phosphate from acetate and ATP. Can also catalyze the reverse reaction. The sequence is that of Acetate kinase from Limosilactobacillus fermentum (strain NBRC 3956 / LMG 18251) (Lactobacillus fermentum).